The following is a 250-amino-acid chain: MLLLISPDGVEEALACATAAEHLDIVDVKKPDEGSLGANFPWVIREIRAAVPADKPVSATVGDVPYKPGTVAQAALGAAVSGATYIKVGLYGCATPDQAIDVMRGVVRAVKDFRADAFVVASGYADAHRIGCVNPLALPDIARRAGADAAMLDTAIKDGTRLFDHVPPEGCAEFVRLAHEAGLLAALAGSVKAADLATLTRIGTDIVGVRGAVCEGGDRDAGRIQPRLVAAFRAEMDRHARAFAAAPAAS.

Lys29 functions as the Schiff-base intermediate with substrate in the catalytic mechanism. Lys87 functions as the Proton acceptor in the catalytic mechanism.

The protein belongs to the MfnB family.

It catalyses the reaction 2 D-glyceraldehyde 3-phosphate = 4-(hydroxymethyl)-2-furancarboxaldehyde phosphate + phosphate + 2 H2O. In terms of biological role, catalyzes the formation of 4-(hydroxymethyl)-2-furancarboxaldehyde phosphate (4-HFC-P) from two molecules of glyceraldehyde-3-P (GA-3-P). This Streptomyces griseus subsp. griseus (strain JCM 4626 / CBS 651.72 / NBRC 13350 / KCC S-0626 / ISP 5235) protein is Putative (5-formylfuran-3-yl)methyl phosphate synthase.